Consider the following 101-residue polypeptide: MQLTLEFGGGLELLCDSEKIHKVNVDLPNGADSDDFTMKHLLSWVRTNLIKERPEMFMKGDTVRPGVLVLVNDCDWELSGQLDTVIEDKDVVVFISTLHGG.

Position 101 is a 1-thioglycine (Gly-101). A Glycyl lysine isopeptide (Gly-Lys) (interchain with K-? in acceptor proteins) cross-link involves residue Gly-101.

This sequence belongs to the URM1 family. In terms of processing, C-terminal thiocarboxylation occurs in 2 steps, it is first acyl-adenylated (-COAMP) via the hesA/moeB/thiF part of the MOCS3 homolog, then thiocarboxylated (-COSH) via the rhodanese domain of the MOCS3 homolog.

It is found in the cytoplasm. Its pathway is tRNA modification; 5-methoxycarbonylmethyl-2-thiouridine-tRNA biosynthesis. Acts as a sulfur carrier required for 2-thiolation of mcm(5)S(2)U at tRNA wobble positions of cytosolic tRNA(Lys), tRNA(Glu) and tRNA(Gln). Serves as sulfur donor in tRNA 2-thiolation reaction by being thiocarboxylated (-COSH) at its C-terminus by MOCS3. The sulfur is then transferred to tRNA to form 2-thiolation of mcm(5)S(2)U. Also acts as a ubiquitin-like protein (UBL) that is covalently conjugated via an isopeptide bond to lysine residues of target proteins. The thiocarboxylated form serves as substrate for conjugation and oxidative stress specifically induces the formation of UBL-protein conjugates. This is Ubiquitin-related modifier 1 homolog 1 from Arabidopsis thaliana (Mouse-ear cress).